We begin with the raw amino-acid sequence, 178 residues long: MAETSTVARPYAKAAFEYARDHKALEAWSGQLASAKQVAADADFDAKVVSNPKLSHDQKTALLLEVCGELDESLCNFIRTVGSRGRLAALPAIAEQFEVLRAEEEKRVDVTIVSAFDLDAAQQDKLATALKKRLNREISITTRVDRALMGGVILRAGDTVIDGSVRGRLTRLRDALSA.

Belongs to the ATPase delta chain family. F-type ATPases have 2 components, F(1) - the catalytic core - and F(0) - the membrane proton channel. F(1) has five subunits: alpha(3), beta(3), gamma(1), delta(1), epsilon(1). F(0) has three main subunits: a(1), b(2) and c(10-14). The alpha and beta chains form an alternating ring which encloses part of the gamma chain. F(1) is attached to F(0) by a central stalk formed by the gamma and epsilon chains, while a peripheral stalk is formed by the delta and b chains.

Its subcellular location is the cell inner membrane. In terms of biological role, f(1)F(0) ATP synthase produces ATP from ADP in the presence of a proton or sodium gradient. F-type ATPases consist of two structural domains, F(1) containing the extramembraneous catalytic core and F(0) containing the membrane proton channel, linked together by a central stalk and a peripheral stalk. During catalysis, ATP synthesis in the catalytic domain of F(1) is coupled via a rotary mechanism of the central stalk subunits to proton translocation. This protein is part of the stalk that links CF(0) to CF(1). It either transmits conformational changes from CF(0) to CF(1) or is implicated in proton conduction. In Chromohalobacter salexigens (strain ATCC BAA-138 / DSM 3043 / CIP 106854 / NCIMB 13768 / 1H11), this protein is ATP synthase subunit delta.